We begin with the raw amino-acid sequence, 102 residues long: Large ribosomal subunit protein uL24 (102 aa).

The protein belongs to the universal ribosomal protein uL24 family. As to quaternary structure, part of the 50S ribosomal subunit.

Its function is as follows. One of two assembly initiator proteins, it binds directly to the 5'-end of the 23S rRNA, where it nucleates assembly of the 50S subunit. Functionally, one of the proteins that surrounds the polypeptide exit tunnel on the outside of the subunit. This Alkaliphilus oremlandii (strain OhILAs) (Clostridium oremlandii (strain OhILAs)) protein is Large ribosomal subunit protein uL24.